The following is a 484-amino-acid chain: UDP-N-acetylmuramoyl-L-alanyl-D-glutamate--2,6-diaminopimelate ligase (484 aa).

A UDP-N-acetyl-alpha-D-muramoyl-L-alanyl-D-glutamate-binding site is contributed by Ser30. Position 109 to 115 (109 to 115 (GTNGKTS)) interacts with ATP. UDP-N-acetyl-alpha-D-muramoyl-L-alanyl-D-glutamate is bound by residues 151–152 (TT), Ser178, and Arg186. Residue Lys218 is modified to N6-carboxylysine. Meso-2,6-diaminopimelate is bound by residues Arg379, 403-406 (DNPR), Gly455, and Glu459. A Meso-diaminopimelate recognition motif motif is present at residues 403-406 (DNPR).

This sequence belongs to the MurCDEF family. MurE subfamily. Mg(2+) serves as cofactor. In terms of processing, carboxylation is probably crucial for Mg(2+) binding and, consequently, for the gamma-phosphate positioning of ATP.

It is found in the cytoplasm. The catalysed reaction is UDP-N-acetyl-alpha-D-muramoyl-L-alanyl-D-glutamate + meso-2,6-diaminopimelate + ATP = UDP-N-acetyl-alpha-D-muramoyl-L-alanyl-gamma-D-glutamyl-meso-2,6-diaminopimelate + ADP + phosphate + H(+). It participates in cell wall biogenesis; peptidoglycan biosynthesis. Its function is as follows. Catalyzes the addition of meso-diaminopimelic acid to the nucleotide precursor UDP-N-acetylmuramoyl-L-alanyl-D-glutamate (UMAG) in the biosynthesis of bacterial cell-wall peptidoglycan. The sequence is that of UDP-N-acetylmuramoyl-L-alanyl-D-glutamate--2,6-diaminopimelate ligase from Clostridioides difficile (strain 630) (Peptoclostridium difficile).